The following is a 377-amino-acid chain: MLEFNQSQPLTLGVELELMILNRRDYNLTRGSDDLLLQINRKPHGYDIKPEITQGMIEIGTAVHSDVNAMLDELLAIRTLLVDSAHKLNLGLAGGGAHPFQHWEDQRIYPKERYKLVSELYGYLAKQFTVYGQHIHIGCPDGDAAVRLTHYLARYIPHFIALSASSPFYQGVDTSFQTSRLTSVNAFPLSGCMPVVDSWDAFNAYFERMEALGIVASMKDFYWDIRPKPEYGTVEIRICDTPLSVETPVLLAAYAQMLARRCFEESWNDICPEPYLTYSYNRFQACRFGFDGVMVDARSKSQLGLQEDLLDTLRALEPHAEALGSQHQLAALRQRALKCHSDSRWLRQIFEQSGSLSEVVRRQSEHWMYAEPGVGVN.

Belongs to the glutamate--cysteine ligase type 2 family. YbdK subfamily.

The enzyme catalyses L-cysteine + L-glutamate + ATP = gamma-L-glutamyl-L-cysteine + ADP + phosphate + H(+). In terms of biological role, ATP-dependent carboxylate-amine ligase which exhibits weak glutamate--cysteine ligase activity. This chain is Putative glutamate--cysteine ligase 2, found in Chromobacterium violaceum (strain ATCC 12472 / DSM 30191 / JCM 1249 / CCUG 213 / NBRC 12614 / NCIMB 9131 / NCTC 9757 / MK).